The following is a 297-amino-acid chain: Mitochondrial nicotinamide adenine dinucleotide transporter SLC25A51 (297 aa).

A compositionally biased stretch (basic and acidic residues) spans 1–11 (MMDSEAHEKRP). Positions 1–20 (MMDSEAHEKRPPILTSSKQD) are disordered. 3 Solcar repeats span residues 28–108 (VGEM…LSCL), 116–200 (PEFA…IKEH), and 213–296 (NDFI…LLKV). The next 6 helical transmembrane spans lie at 36-56 (CGCCAAFNNVAITFPIQKVLF), 85-105 (LPPLMQKTTTLALMFGLYEDL), 116-135 (PEFATSGVAAVLAGTTEAIF), 179-199 (ILFRNGLSNVLFFGLRGPIKE), 215-235 (FICGGLLGAMLGFLFFPINVV), and 268-289 (LFRGAHLNYHRSLISWGIINAT).

The protein belongs to the mitochondrial carrier (TC 2.A.29) family.

The protein localises to the mitochondrion inner membrane. It catalyses the reaction NAD(+)(in) = NAD(+)(out). In terms of biological role, mitochondrial membrane carrier protein that mediates the import of NAD(+) into mitochondria. Mitochondrial NAD(+) is required for glycolysis and mitochondrial respiration. Compared to SLC25A52, SLC25A51-mediated transport is essential for the import of NAD(+) in mitochondria. The transport mechanism, uniport or antiport, its electrogenicity and substrate selectivity, remain to be elucidated. This Homo sapiens (Human) protein is Mitochondrial nicotinamide adenine dinucleotide transporter SLC25A51.